A 466-amino-acid chain; its full sequence is Glutamate--tRNA ligase 1 (466 aa).

Residues 9-19 (PSPTGYLHIGG) carry the 'HIGH' region motif. The Zn(2+) site is built by Cys-98, Cys-100, Cys-125, and Glu-127. Residues 236-240 (KLSKR) carry the 'KMSKS' region motif. Lys-239 serves as a coordination point for ATP.

Belongs to the class-I aminoacyl-tRNA synthetase family. Glutamate--tRNA ligase type 1 subfamily. Monomer. Requires Zn(2+) as cofactor.

The protein localises to the cytoplasm. It catalyses the reaction tRNA(Glu) + L-glutamate + ATP = L-glutamyl-tRNA(Glu) + AMP + diphosphate. In terms of biological role, catalyzes the attachment of glutamate to tRNA(Glu) in a two-step reaction: glutamate is first activated by ATP to form Glu-AMP and then transferred to the acceptor end of tRNA(Glu). The polypeptide is Glutamate--tRNA ligase 1 (Acidithiobacillus ferrooxidans (strain ATCC 53993 / BNL-5-31) (Leptospirillum ferrooxidans (ATCC 53993))).